Reading from the N-terminus, the 83-residue chain is Protein WFDC9 (83 aa).

A signal peptide spans 1–24; sequence MKPWIIVLTVSAHGILVFLHVLGS.

The protein resides in the secreted. The polypeptide is Protein WFDC9 (Wfdc9) (Mus musculus (Mouse)).